A 46-amino-acid chain; its full sequence is Large ribosomal subunit protein bL36 (46 aa).

It belongs to the bacterial ribosomal protein bL36 family.

In Serratia proteamaculans (strain 568), this protein is Large ribosomal subunit protein bL36.